The following is a 55-amino-acid chain: Beta-toxin Cn7 (55 aa).

In terms of domain architecture, LCN-type CS-alpha/beta spans 1–55 (KEGYIVNYHDGCKYECYKLGDNDYCLRECKLRVGKGAGGYCYAFACWCTHLYEQA). Cystine bridges form between Cys16/Cys41, Cys25/Cys46, and Cys29/Cys48.

Belongs to the long (3 C-C) scorpion toxin superfamily. Sodium channel inhibitor family. Beta subfamily. Expressed by the venom gland.

It is found in the secreted. In terms of biological role, beta toxins bind voltage-independently at site-4 of sodium channels (Nav) and shift the voltage of activation toward more negative potentials thereby affecting sodium channel activation and promoting spontaneous and repetitive firing. This is Beta-toxin Cn7 from Centruroides noxius (Mexican scorpion).